We begin with the raw amino-acid sequence, 125 residues long: Large ribosomal subunit protein bL12 (125 aa).

This sequence belongs to the bacterial ribosomal protein bL12 family. Homodimer. Part of the ribosomal stalk of the 50S ribosomal subunit. Forms a multimeric L10(L12)X complex, where L10 forms an elongated spine to which 2 to 4 L12 dimers bind in a sequential fashion. Binds GTP-bound translation factors.

Forms part of the ribosomal stalk which helps the ribosome interact with GTP-bound translation factors. Is thus essential for accurate translation. The chain is Large ribosomal subunit protein bL12 from Dictyoglomus thermophilum (strain ATCC 35947 / DSM 3960 / H-6-12).